A 223-amino-acid polypeptide reads, in one-letter code: Deoxyribose-phosphate aldolase (223 aa).

D89 acts as the Proton donor/acceptor in catalysis. Catalysis depends on K152, which acts as the Schiff-base intermediate with acetaldehyde. Residue K181 is the Proton donor/acceptor of the active site.

This sequence belongs to the DeoC/FbaB aldolase family. DeoC type 1 subfamily.

It is found in the cytoplasm. The catalysed reaction is 2-deoxy-D-ribose 5-phosphate = D-glyceraldehyde 3-phosphate + acetaldehyde. The protein operates within carbohydrate degradation; 2-deoxy-D-ribose 1-phosphate degradation; D-glyceraldehyde 3-phosphate and acetaldehyde from 2-deoxy-alpha-D-ribose 1-phosphate: step 2/2. Functionally, catalyzes a reversible aldol reaction between acetaldehyde and D-glyceraldehyde 3-phosphate to generate 2-deoxy-D-ribose 5-phosphate. This chain is Deoxyribose-phosphate aldolase, found in Bacillus cereus (strain ZK / E33L).